The chain runs to 366 residues: 5-hydroxytryptamine receptor 1F (366 aa).

Over 1–24 the chain is Extracellular; that stretch reads MDFLNASDQNLTSEELLNRMPSKI. Asparagine 5 and asparagine 10 each carry an N-linked (GlcNAc...) asparagine glycan. Residues 25–49 traverse the membrane as a helical segment; sequence LVSLTLSGLALMTTTINSLVIAAII. Topologically, residues 50–59 are cytoplasmic; it reads VTRKLHHPAN. Residues 60 to 81 form a helical membrane-spanning segment; the sequence is YLICSLAVTDFLVAVLVMPFSI. At 82 to 96 the chain is on the extracellular side; the sequence is VYIVRESWIMGQVLC. Cysteine 96 and cysteine 172 are disulfide-bonded. The helical transmembrane segment at 97-119 threads the bilayer; that stretch reads DIWLSVDIICCTCSILHLSAIAL. 2 residues coordinate serotonin: aspartate 103 and cysteine 107. Residues 120-122 carry the DRY motif; important for ligand-induced conformation changes motif; it reads DRY. Residues 120 to 139 lie on the Cytoplasmic side of the membrane; that stretch reads DRYRAITDAVEYARKRTPRH. Residues 140-159 form a helical membrane-spanning segment; that stretch reads AGIMITIVWVISVFISMPPL. Topologically, residues 160-178 are extracellular; it reads FWRHQGTSRDDECVIKHDH. Residues 179–202 form a helical membrane-spanning segment; it reads IVSTIYSTFGAFYIPLVLILILYY. Residues 203 to 291 lie on the Cytoplasmic side of the membrane; it reads KIYRAARTLY…KISGTRERKA (89 aa). Residues 292–315 form a helical membrane-spanning segment; sequence ATTLGLILGAFVICWLPFFVKELV. Residues 316 to 327 are Extracellular-facing; that stretch reads VNVCEKCKISEE. The chain crosses the membrane as a helical span at residues 328–350; the sequence is MSNFLAWLGYLNSLINPLIYTIF. Residues 343–347 carry the NPxxY motif; important for ligand-induced conformation changes and signaling motif; it reads NPLIY. At 351–366 the chain is on the cytoplasmic side; sequence NEDFKKAFQKLVRCRY.

It belongs to the G-protein coupled receptor 1 family. Detected in hippocampus.

Its subcellular location is the cell membrane. Its function is as follows. G-protein coupled receptor for 5-hydroxytryptamine (serotonin). Also functions as a receptor for various alkaloids and psychoactive substances. Ligand binding causes a conformation change that triggers signaling via guanine nucleotide-binding proteins (G proteins) and modulates the activity of downstream effectors, such as adenylate cyclase. HTR1F is coupled to G(i)/G(o) G alpha proteins and mediates inhibitory neurotransmission by inhibiting adenylate cyclase activity. This is 5-hydroxytryptamine receptor 1F (Htr1f) from Mus musculus (Mouse).